A 118-amino-acid chain; its full sequence is UPF0342 protein BAMEG_3696 (118 aa).

It belongs to the UPF0342 family.

In Bacillus anthracis (strain CDC 684 / NRRL 3495), this protein is UPF0342 protein BAMEG_3696.